Consider the following 297-residue polypeptide: Cyclin-dependent kinase 1 (297 aa).

The region spanning 4–293 (YQKVEKIGEG…AKRALQQNYL (290 aa)) is the Protein kinase domain. ATP is bound by residues 10 to 18 (IGEGTYGVV) and Lys33. At Thr14 the chain carries Phosphothreonine. Tyr15 is subject to Phosphotyrosine. Asp134 serves as the catalytic Proton acceptor. Thr167 is subject to Phosphothreonine.

It belongs to the protein kinase superfamily. CMGC Ser/Thr protein kinase family. CDC2/CDKX subfamily. Forms a stable but non-covalent complex with regulatory subunit suc1 and with a cyclin. Interacts with cyclin cdc13. Interacts with cyclin cig2. Interacts with cdc37.

The protein resides in the cytoplasm. The enzyme catalyses L-seryl-[protein] + ATP = O-phospho-L-seryl-[protein] + ADP + H(+). It catalyses the reaction L-threonyl-[protein] + ATP = O-phospho-L-threonyl-[protein] + ADP + H(+). Phosphorylation at Thr-14 or Tyr-15 inactivates the enzyme, while phosphorylation at Thr-167 activates it. Cyclin-dependent kinase that acts as a master regulator of the mitotic and meiotic cell cycles. Required to drive the G1-S and G2-M transitions, and initiation of premeiotic DNA replication and meiosis II. More than 200 substrates have been identified. Substrate specificity is in part regulated by the bound cyclin protein. When complexed with cyclin cig2, it drives the G1-S phase transition. When complexed with cyclin cdc13, it drives the G2-M transition and initiation of meiosis II. Its activity rises throughout the cell cycle and substrate specificity is further influenced by activity thresholds with more sensitive substrates phosphorylated earlier in the cell cycle than less sensitive substrates. Phosphorylates dis1 during metaphase to ensure proper microtubule dynamics and accurate chromosome segregation. Phosphorylates the repetitive C-terminus of the large subunit of RNA polymerase II rpb1. Inactivated by checkpoint signaling following detection of cellular damage, leading to cell cycle arrest to allow damage repair. Inactivated during G2 DNA damage checkpoint signaling. Inactivated in response to defective RNA splicing. The sequence is that of Cyclin-dependent kinase 1 from Schizosaccharomyces pombe (strain 972 / ATCC 24843) (Fission yeast).